A 526-amino-acid polypeptide reads, in one-letter code: Chaperonin GroEL, chloroplastic (526 aa).

ATP-binding positions include threonine 29–proline 32, aspartate 86–threonine 90, glycine 412, aspartate 476–alanine 478, and aspartate 492.

The protein belongs to the chaperonin (HSP60) family. In terms of assembly, forms a cylinder of 14 subunits composed of two heptameric rings stacked back-to-back. Interacts with the co-chaperonin GroES.

It localises to the plastid. Its subcellular location is the chloroplast. The enzyme catalyses ATP + H2O + a folded polypeptide = ADP + phosphate + an unfolded polypeptide.. Functionally, together with its co-chaperonin GroES, plays an essential role in assisting protein folding. The GroEL-GroES system forms a nano-cage that allows encapsulation of the non-native substrate proteins and provides a physical environment optimized to promote and accelerate protein folding. The protein is Chaperonin GroEL, chloroplastic of Cyanidioschyzon merolae (strain NIES-3377 / 10D) (Unicellular red alga).